The primary structure comprises 307 residues: tRNA pseudouridine synthase B (307 aa).

Catalysis depends on D38, which acts as the Nucleophile.

Belongs to the pseudouridine synthase TruB family. Type 1 subfamily.

It carries out the reaction uridine(55) in tRNA = pseudouridine(55) in tRNA. Its function is as follows. Responsible for synthesis of pseudouridine from uracil-55 in the psi GC loop of transfer RNAs. This is tRNA pseudouridine synthase B from Bacillus cytotoxicus (strain DSM 22905 / CIP 110041 / 391-98 / NVH 391-98).